The following is a 154-amino-acid chain: Large ribosomal subunit protein uL13 (154 aa).

This sequence belongs to the universal ribosomal protein uL13 family. Part of the 50S ribosomal subunit.

This protein is one of the early assembly proteins of the 50S ribosomal subunit, although it is not seen to bind rRNA by itself. It is important during the early stages of 50S assembly. This chain is Large ribosomal subunit protein uL13, found in Rhodopseudomonas palustris (strain BisB18).